The chain runs to 793 residues: Ent-copalyl diphosphate synthase, chloroplastic (793 aa).

The N-terminal 47 residues, 1-47 (MPLASNPVAFLPSSTAHGDLPAAAFSRSSAGCLQLCRPLTPTSSLQC), are a transit peptide targeting the chloroplast. 2 residues coordinate Mg(2+): D372 and D374. The DXDD motif signature appears at 372–375 (DIDD).

This sequence belongs to the terpene synthase family. It depends on Mg(2+) as a cofactor.

It is found in the plastid. It localises to the chloroplast. It carries out the reaction (2E,6E,10E)-geranylgeranyl diphosphate = ent-copalyl diphosphate. Its pathway is plant hormone biosynthesis; gibberellin biosynthesis. Catalyzes the conversion of geranylgeranyl diphosphate (GGPP) to the gibberellin precursor ent-copalyl diphosphate (CPP). This chain is Ent-copalyl diphosphate synthase, chloroplastic, found in Salvia miltiorrhiza (Chinese sage).